A 65-amino-acid polypeptide reads, in one-letter code: uncharacterized protein (65 aa).

The ompR/PhoB-type DNA-binding region spans 1 to 65 (MIALSVCWQI…ETGIGYRFML (65 aa)).

This is an uncharacterized protein from Escherichia coli (strain K12).